Here is a 410-residue protein sequence, read N- to C-terminus: Protein CNPPD1 (410 aa).

A helical membrane pass occupies residues 233 to 253 (CLLAVAYVSSVALAVASVAVI).

It belongs to the CNPPD1 family.

It is found in the membrane. The sequence is that of Protein CNPPD1 (CNPPD1) from Pongo abelii (Sumatran orangutan).